The primary structure comprises 507 residues: ATP synthase subunit alpha, chloroplastic (507 aa).

170–177 contributes to the ATP binding site; sequence GDRQTGKT. Position 257 is a phosphothreonine (threonine 257).

This sequence belongs to the ATPase alpha/beta chains family. As to quaternary structure, F-type ATPases have 2 components, CF(1) - the catalytic core - and CF(0) - the membrane proton channel. CF(1) has five subunits: alpha(3), beta(3), gamma(1), delta(1), epsilon(1). CF(0) has four main subunits: a, b, b' and c.

The protein localises to the plastid. It localises to the chloroplast thylakoid membrane. The catalysed reaction is ATP + H2O + 4 H(+)(in) = ADP + phosphate + 5 H(+)(out). Functionally, produces ATP from ADP in the presence of a proton gradient across the membrane. The alpha chain is a regulatory subunit. The polypeptide is ATP synthase subunit alpha, chloroplastic (Lepidium virginicum (Virginia pepperweed)).